The following is a 510-amino-acid chain: GMP synthase [glutamine-hydrolyzing] (510 aa).

The region spanning 5-195 is the Glutamine amidotransferase type-1 domain; it reads TVVVLDFGGQ…LFEICGLRGD (191 aa). C82 functions as the Nucleophile in the catalytic mechanism. Residues H169 and E171 contribute to the active site. The region spanning 196–385 is the GMPS ATP-PPase domain; that stretch reads WDLSDFISEA…LGIPAEILWR (190 aa). Position 223–229 (223–229) interacts with ATP; it reads SGGVDSS.

As to quaternary structure, homodimer.

It catalyses the reaction XMP + L-glutamine + ATP + H2O = GMP + L-glutamate + AMP + diphosphate + 2 H(+). It functions in the pathway purine metabolism; GMP biosynthesis; GMP from XMP (L-Gln route): step 1/1. In terms of biological role, catalyzes the synthesis of GMP from XMP. This chain is GMP synthase [glutamine-hydrolyzing], found in Syntrophomonas wolfei subsp. wolfei (strain DSM 2245B / Goettingen).